Reading from the N-terminus, the 245-residue chain is Transmembrane protein 69 (245 aa).

5 consecutive transmembrane segments (helical) span residues 97–117 (ALYI…LMVI), 122–142 (IPVL…FLGG), 159–179 (YINL…ILFS), 185–205 (AIVT…FLLP), and 216–236 (IVST…ENIY).

Its subcellular location is the membrane. The protein is Transmembrane protein 69 (Tmem69) of Mus musculus (Mouse).